A 1337-amino-acid polypeptide reads, in one-letter code: Zinc finger protein 335 (1337 aa).

2 disordered regions span residues 1 to 108 (MEEN…LVHS) and 198 to 226 (GPTS…PPAP). 2 stretches are compositionally biased toward low complexity: residues 31-45 (TSEA…AATV) and 54-63 (SGVGQSSDGG). The segment at 248–271 (FKCKMCQYRSSTKATLLRHMRERH) adopts a C2H2-type 1 zinc-finger fold. The disordered stretch occupies residues 278 to 444 (AAAAATGKRG…PPRRRGRPSR (167 aa)). Over residues 302 to 332 (DRPEEEEEDDDIVDAGAIDDLEEDSDYNPAE) the composition is skewed to acidic residues. Positions 351–362 (RPRRRPGRPRKL) are enriched in basic residues. Basic and acidic residues predominate over residues 363–372 (PRLETSDLHD). The span at 378-388 (LVSSQSTQSPP) shows a compositional bias: polar residues. 8 C2H2-type zinc fingers span residues 466 to 488 (YLCR…VNSH), 496 to 518 (FRCL…MFNH), 524 to 546 (YKCD…AAVH), 563 to 585 (FPCP…MKTH), 591 to 613 (HMCD…LLTH), 622 to 644 (FKCE…QLSH), 650 to 673 (FKCS…AVKH), and 679 to 702 (FACE…RCRH). Disordered regions lie at residues 733 to 767 (LKQQ…TPPL) and 963 to 999 (QCGG…ASHT). The span at 741–756 (PGPPLSSPGPEAPQEP) shows a compositional bias: pro residues. Ser976 and Ser1007 each carry phosphoserine. 4 C2H2-type zinc fingers span residues 1019–1041 (FSCK…KRAH), 1047–1069 (FKCP…MAQH), 1075–1097 (HQCN…MLTH), and 1103–1126 (FSCH…QRLH). Lys1022 is covalently cross-linked (Glycyl lysine isopeptide (Lys-Gly) (interchain with G-Cter in SUMO2)). Residue Ser1149 is modified to Phosphoserine.

This sequence belongs to the krueppel C2H2-type zinc-finger protein family. In terms of assembly, interacts with NCOA6; may enhance ligand-dependent transcriptional activation by nuclear hormone receptors. Interacts with CNOT6. Interacts with CNOT9; the interaction is direct. Component of a nuclear receptor-mediated transcription complex composed of at least ZNF335, CCAR2 and EMSY; the complex stimulates the transcription of nuclear receptor target genes such as SOX9 and HOXA1. Within the complex interacts with EMSY and interacts (via C-terminus) with CCAR2. Interacts with members of histone H3'Lys4'(H3K4) methyltransferase complexes ASH2L, CXXC1, KMT2A/MLL1, RBBP5, SETD1A and WDR5. Component of a histone methylation complex composed of at least ZNF335, RBBP5, ASH2L and WDR5; the complex may have histone H3-specific methyltransferase activity, however does not have specificity for 'Lys-4' of histone H3. Interacts with RBBP5 and WDR5. Interacts with ASHL2. Components of this complex may associate with components of the ZNF335-CCAR2-EMSY nuclear receptor-mediated transcription complex to form a complex at least composed of ZNF335, HCFC1, CCAR2, EMSY, MKI67, RBBP5, ASH2L and WDR5. Within this complex also interacts with HCFC1 and MKI67. As to expression, expressed at low levels in cerebral cortex, hippocampus and cerebellum (at protein level).

Its subcellular location is the nucleus. Component or associated component of some histone methyltransferase complexes may regulate transcription through recruitment of those complexes on gene promoters. Enhances ligand-dependent transcriptional activation by nuclear hormone receptors. Plays an important role in neural progenitor cell proliferation and self-renewal through the regulation of specific genes involved brain development, including REST. Also controls the expression of genes involved in somatic development and regulates, for instance, lymphoblast proliferation. The protein is Zinc finger protein 335 (Znf335) of Mus musculus (Mouse).